We begin with the raw amino-acid sequence, 124 residues long: Small ribosomal subunit protein uS13 (124 aa).

Residues 96 to 124 (LPVRGQRTKTNARTRKGPRRTVAGKKKAK) form a disordered region.

Belongs to the universal ribosomal protein uS13 family. In terms of assembly, part of the 30S ribosomal subunit. Forms a loose heterodimer with protein S19. Forms two bridges to the 50S subunit in the 70S ribosome.

Functionally, located at the top of the head of the 30S subunit, it contacts several helices of the 16S rRNA. In the 70S ribosome it contacts the 23S rRNA (bridge B1a) and protein L5 of the 50S subunit (bridge B1b), connecting the 2 subunits; these bridges are implicated in subunit movement. Contacts the tRNAs in the A and P-sites. In Symbiobacterium thermophilum (strain DSM 24528 / JCM 14929 / IAM 14863 / T), this protein is Small ribosomal subunit protein uS13.